The following is a 94-amino-acid chain: Integration host factor subunit beta (94 aa).

Belongs to the bacterial histone-like protein family. Heterodimer of an alpha and a beta chain.

Its function is as follows. This protein is one of the two subunits of integration host factor, a specific DNA-binding protein that functions in genetic recombination as well as in transcriptional and translational control. The sequence is that of Integration host factor subunit beta from Pectobacterium atrosepticum (strain SCRI 1043 / ATCC BAA-672) (Erwinia carotovora subsp. atroseptica).